The chain runs to 182 residues: 5-formyltetrahydrofolate cyclo-ligase (182 aa).

The disordered stretch occupies residues 1 to 21 (MIRQRRRALTPEQQQEMGQQA). Polar residues predominate over residues 11-21 (PEQQQEMGQQA). Residues 128–135 (GMGGGFYD) and Asp-167 each bind ATP.

The protein belongs to the 5-formyltetrahydrofolate cyclo-ligase family.

The enzyme catalyses (6S)-5-formyl-5,6,7,8-tetrahydrofolate + ATP = (6R)-5,10-methenyltetrahydrofolate + ADP + phosphate. It participates in one-carbon metabolism; tetrahydrofolate interconversion. Its function is as follows. Involved in the removal of 5-formyltetrahydrofolate. In vitro, it is a potent inhibitor of various folate-dependent enzymes in the C1 metabolism network and in vivo it might function as a folate storage. 5-formyltetrahydrofolate is also used as an antifolate rescue agent in cancer chemotherapy. Catalyzes the irreversible ATP-dependent transformation of 5-formyltetrahydrofolate (5-CHO-THF) to form 5,10-methenyltetrahydrofolate (5,10-CH=THF). The reverse reaction is catalyzed by the serine hydroxymethyltransferase GlyA (SHMT). The polypeptide is 5-formyltetrahydrofolate cyclo-ligase (ygfA) (Escherichia coli O157:H7).